The chain runs to 309 residues: Glutaminase (309 aa).

Substrate contacts are provided by Ser64, Asn114, Glu160, Asn167, Tyr191, Tyr243, and Val261.

This sequence belongs to the glutaminase family. Homotetramer.

It carries out the reaction L-glutamine + H2O = L-glutamate + NH4(+). The protein is Glutaminase of Methylobacterium nodulans (strain LMG 21967 / CNCM I-2342 / ORS 2060).